Here is a 215-residue protein sequence, read N- to C-terminus: Cytidylate kinase (215 aa).

10–18 is a binding site for ATP; sequence GPAASGKGT.

It belongs to the cytidylate kinase family. Type 1 subfamily.

Its subcellular location is the cytoplasm. The catalysed reaction is CMP + ATP = CDP + ADP. It carries out the reaction dCMP + ATP = dCDP + ADP. The protein is Cytidylate kinase of Bartonella henselae (strain ATCC 49882 / DSM 28221 / CCUG 30454 / Houston 1) (Rochalimaea henselae).